The following is a 480-amino-acid chain: MAAVGAALGPLVTGLYDVQAFKFGDFVLKSGLSSPIYIDLRGIVSRPRLLSQVADTLFQTAQNAGISFDTVCGVPYTALPLATVICSTNQIPMLIRRKETKDYGTKRLVEGTINPGETCLIIEDVVTSGSSVLETAEVLQKEGLKVTDAIVLLDREQGGKDKLQAHGIRLHSVCTLSKMLEILEQQKKIDAETVGRVKRFIQENVFVAANHNGSPLSIKEAPKELSFSARAELPRIHPVASKLLRLMQKKETNLCLSADVSEARELLQLADALGPSICMLKTHVDILNDFTLDVMKELITLAKRHEFLIFEDRKFADIGNTVKKQYEGGVFKIASWADLVNAHVVPGSGVVKGLQEVGLPLHRGCLLIAEMSSTGSLATGDYTRAAVRMAEEHSEFVVGFISGSRVSMKPEFLHLTPGVQLEAGGDNLGQQYNSPQEVIGKRGSDIIIVGRGIISAADCLEAAEMYRKAAWEAYLSRLGV.

N-acetylalanine is present on Ala-2. Positions Ala-2 to Ser-214 are OPRTase. Tyr-37 is modified (phosphotyrosine). At Ser-214 the chain carries Phosphoserine. The domain linker stretch occupies residues Pro-215–Glu-220. The segment at Ala-221–Val-480 is OMPdecase. Residue Ser-257 coordinates orotidine 5'-phosphate. UMP is bound by residues Ser-257, Asp-259, and Lys-281–His-283. Orotidine 5'-phosphate-binding positions include Lys-281, Lys-314, Asp-317, Thr-321, Ser-372, Gln-430–Tyr-432, and Gly-450–Arg-451. Residues Lys-314 and Asp-317 each act as for OMPdecase activity in the active site. Residues Asp-317, Thr-321, Ser-372, Gln-430–Tyr-432, and Gly-450–Arg-451 contribute to the UMP site.

This sequence in the N-terminal section; belongs to the purine/pyrimidine phosphoribosyltransferase family. The protein in the C-terminal section; belongs to the OMP decarboxylase family. As to quaternary structure, homodimer; dimerization is required for enzymatic activity.

It catalyses the reaction orotidine 5'-phosphate + diphosphate = orotate + 5-phospho-alpha-D-ribose 1-diphosphate. The catalysed reaction is orotidine 5'-phosphate + H(+) = UMP + CO2. Its pathway is pyrimidine metabolism; UMP biosynthesis via de novo pathway; UMP from orotate: step 1/2. The protein operates within pyrimidine metabolism; UMP biosynthesis via de novo pathway; UMP from orotate: step 2/2. Bifunctional enzyme catalyzing the last two steps of de novo pyrimidine biosynthesis, orotate phosphoribosyltransferase (OPRT), which converts orotate to orotidine-5'-monophosphate (OMP), and orotidine-5'-monophosphate decarboxylase (ODC), the terminal enzymatic reaction that decarboxylates OMP to uridine monophosphate (UMP). This chain is Uridine 5'-monophosphate synthase (UMPS), found in Pongo abelii (Sumatran orangutan).